We begin with the raw amino-acid sequence, 198 residues long: Small ribosomal subunit protein uS4 (198 aa).

Residues 91–151 form the S4 RNA-binding domain; the sequence is SRLDNIVYRL…EKSKNLKIVE (61 aa).

It belongs to the universal ribosomal protein uS4 family. Part of the 30S ribosomal subunit. Contacts protein S5. The interaction surface between S4 and S5 is involved in control of translational fidelity.

Its function is as follows. One of the primary rRNA binding proteins, it binds directly to 16S rRNA where it nucleates assembly of the body of the 30S subunit. Functionally, with S5 and S12 plays an important role in translational accuracy. The sequence is that of Small ribosomal subunit protein uS4 from Phytoplasma australiense.